Here is a 340-residue protein sequence, read N- to C-terminus: Alcohol dehydrogenase patD (340 aa).

C46 lines the Zn(2+) pocket. H47 serves as a coordination point for NAD(+). The Zn(2+) site is built by H67, E68, C101, C104, C112, and C154. Residue H67 coordinates substrate. NAD(+) contacts are provided by residues 178–183, 198–203, K206, 265–267, 289–291, and 297–299; these read GLGGLG, VALSRD, LSI, PSG, and EDA.

Belongs to the zinc-containing alcohol dehydrogenase family. It depends on Zn(2+) as a cofactor.

It localises to the cytoplasm. It is found in the cytosol. The enzyme catalyses neopatulin + NADPH + H(+) = (E)-ascladiol + NADP(+). It participates in mycotoxin biosynthesis; patulin biosynthesis. In terms of biological role, alcohol dehydrogenase; part of the gene cluster that mediates the biosynthesis of patulin, an acetate-derived tetraketide mycotoxin produced by several fungal species that shows antimicrobial properties against several bacteria. PatD catalyzes the conversion of neopatulin into E-ascladiol. The pathway begins with the synthesis of 6-methylsalicylic acid by the polyketide synthase (PKS) patK via condensation of acetate and malonate units. The 6-methylsalicylic acid decarboxylase patG then catalyzes the decarboxylation of 6-methylsalicylic acid to yield m-cresol (also known as 3-methylphenol). These first reactions occur in the cytosol. The intermediate m-cresol is then transported into the endoplasmic reticulum where the cytochrome P450 monooxygenase patH converts it to m-hydroxybenzyl alcohol, which is further converted to gentisyl alcohol by the cytochrome P450 monooxygenase patI. The oxidoreductases patJ and patO further convert gentisyl alcohol to isoepoxydon in the vacuole. PatN catalyzes then the transformation of isoepoxydon into phyllostine. The cluster protein patF is responsible for the conversion from phyllostine to neopatulin whereas the alcohol dehydrogenase patD converts neopatulin to E-ascladiol. The steps between isoepoxydon and E-ascladiol occur in the cytosol, and E-ascladiol is probably secreted to the extracellular space by one of the cluster-specific transporters patC or patM. Finally, the secreted patulin synthase patE catalyzes the conversion of E-ascladiol to patulin. The protein is Alcohol dehydrogenase patD of Penicillium expansum (Blue mold rot fungus).